A 70-amino-acid chain; its full sequence is Prokaryotic ubiquitin-like protein UBact (70 aa).

Composition is skewed to basic and acidic residues over residues 1 to 15 (MPDQ…RKQG) and 24 to 50 (TRHD…RDPG). The disordered stretch occupies residues 1–70 (MPDQRQQERS…RQQRREQSGE (70 aa)). E70 is covalently cross-linked (Isoglutamyl lysine isopeptide (Glu-Lys) (interchain with K-? in acceptor proteins)).

This sequence belongs to the ubiquitin-like protein UBact family.

In terms of biological role, may function as a protein modifier covalently attached to lysine residues of substrate proteins. This may serve to target the modified proteins for degradation by proteasomes. In Terrybacteria sp. (strain RIFCSPHIGHO2_01_FULL_58_15), this protein is Prokaryotic ubiquitin-like protein UBact.